A 30-amino-acid chain; its full sequence is Cyclotide hyen-K (30 aa).

Residues 1–30 (GIPCGESCIFIPCITTVVGCSCSNKVCYDN) constitute a cross-link (cyclopeptide (Gly-Asn)). Intrachain disulfides connect Cys-4–Cys-20, Cys-8–Cys-22, and Cys-13–Cys-27.

This is a cyclic peptide. In terms of tissue distribution, detected in seeds (at protein level).

Functionally, probably participates in a plant defense mechanism. The sequence is that of Cyclotide hyen-K from Pigea enneasperma (Spade flower).